We begin with the raw amino-acid sequence, 416 residues long: Enterobactin exporter EntS (416 aa).

Topologically, residues 1–21 are cytoplasmic; that stretch reads MNKQSWLLNLSLLKTHPAFRA. The chain crosses the membrane as a helical span at residues 22–42; the sequence is VFLARFISIVSLGLLGVAVPV. The Periplasmic portion of the chain corresponds to 43-55; that stretch reads QIQMMTHSTWQVG. A helical transmembrane segment spans residues 56–76; the sequence is LSVTLTGGAMFVGLMVGGVLA. Residues 77 to 83 are Cytoplasmic-facing; sequence DRYERKK. A helical transmembrane segment spans residues 84 to 104; sequence VILLARGTCGIGFIGLCLNAL. Topologically, residues 105–109 are periplasmic; it reads LPEPS. A helical membrane pass occupies residues 110–130; that stretch reads LLAIYLLGLWDGFFASLGVTA. The Cytoplasmic segment spans residues 131-156; that stretch reads LLAATPALVGRENLMQAGAITMLTVR. The helical transmembrane segment at 157–177 threads the bilayer; the sequence is LGSVISPMIGGLLLATGGVAW. Asparagine 178 is a topological domain (periplasmic). The helical transmembrane segment at 179–199 threads the bilayer; it reads YGLAAAGTFITLLPLLSLPAL. At 200–218 the chain is on the cytoplasmic side; that stretch reads PPPPQPREHPLKSLLAGFR. Residues 219–239 traverse the membrane as a helical segment; sequence FLLASPLVGGIALLGGLLTMA. Residues 240-256 are Periplasmic-facing; it reads SAVRVLYPALADNWQMS. Residues 257–277 traverse the membrane as a helical segment; sequence AAQIGFLYAAIPLGAAIGALT. Topologically, residues 278-287 are cytoplasmic; the sequence is SGKLAHSVRP. Residues 288–307 traverse the membrane as a helical segment; sequence GLLMLLSTLGAFLAIGLFGL. Topologically, residues 308-313 are periplasmic; sequence MPMWIL. The helical transmembrane segment at 314–336 threads the bilayer; that stretch reads GVVCLALFGWLSAVSSLLQYTML. Over 337–356 the chain is Cytoplasmic; that stretch reads QTQTPEAMLGRINGLWTAQN. A helical membrane pass occupies residues 357-377; the sequence is VTGDAIGAALLGGLGAMMTPV. Alanine 378 is a topological domain (periplasmic). Residues 379-399 form a helical membrane-spanning segment; that stretch reads SASASGFGLLIIGVLLLLVLV. At 400-416 the chain is on the cytoplasmic side; sequence ELRRFRQTPPQVTASDS.

The protein belongs to the major facilitator superfamily. EntS (TC 2.A.1.38) family.

The protein resides in the cell inner membrane. Its function is as follows. Component of an export pathway for enterobactin. This is Enterobactin exporter EntS from Escherichia coli O6:H1 (strain CFT073 / ATCC 700928 / UPEC).